Reading from the N-terminus, the 180-residue chain is Beta-lactoglobulin-1 (180 aa).

The first 18 residues, 1 to 18 (MKCLLLALGLALMCGIQA), serve as a signal peptide directing secretion. Disulfide bonds link Cys84-Cys178 and Cys124-Cys137.

Belongs to the calycin superfamily. Lipocalin family. In terms of assembly, monomer.

The protein resides in the secreted. In terms of biological role, lactoglobulin is the primary component of whey, it binds retinol and is probably involved in the transport of that molecule. The protein is Beta-lactoglobulin-1 (LGB1) of Equus caballus (Horse).